The sequence spans 443 residues: Protein Z-dependent protease inhibitor (443 aa).

The first 23 residues, 1–23 (MKVVPSLLLSVLLAQVWLVPGLA), serve as a signal peptide directing secretion. Residues 24–66 (PSPQSPETPAPQNQTSRVVQAPREEEEDEQEASEEKAGDEEKA) form a disordered region. Asparagine 36 carries an N-linked (GlcNAc...) asparagine glycan. Serine 56 is subject to Phosphoserine. Positions 56–66 (SEEKAGDEEKA) are enriched in basic and acidic residues. The interval 136–153 (TKPGLLPSLFKGLRETLS) is heparin-binding. Residues asparagine 180 and asparagine 295 are each glycosylated (N-linked (GlcNAc...) asparagine).

This sequence belongs to the serpin family. Phosphorylated by FAM20C in the extracellular medium.

Its subcellular location is the secreted. In terms of biological role, inhibits activity of the coagulation protease factor Xa in the presence of PROZ, calcium and phospholipids. Also inhibits factor XIa in the absence of cofactors. This chain is Protein Z-dependent protease inhibitor (SERPINA10), found in Pongo abelii (Sumatran orangutan).